A 479-amino-acid chain; its full sequence is Baeyer-Villiger monooxygenase AacuH (479 aa).

The interval 14–34 (DSLGHPDGASRPPVSAESLSR) is disordered.

This sequence belongs to the AflY oxidoreductase family.

It functions in the pathway secondary metabolite biosynthesis. Its function is as follows. Baeyer-Villiger monooxygenase; part of the gene cluster that mediates the biosynthesis of the tetrahydroxanthone dimer secalonic acid D. The pathway begins with the synthesis of atrochrysone thioester by the polyketide synthase AacuL. The atrochrysone carboxyl ACP thioesterase AacuM then breaks the thioester bond and releases the atrochrysone carboxylic acid from AacuL. Atrochrysone carboxylic acid is decarboxylated by the decarboxylase AacuI, and oxidized by the anthrone oxygenase AacuG to yield emodin. Emodin is then reduced to emodin hydroquinone by a yet unidentified oxidoreductase. A-ring reduction by the short chain dehydrogenase AacuN, dehydration by the scytalone dehydratase-like protein AacuK and probable spontaneous re-oxidation, results in overall deoxygenation to chrysophanol. Baeyer-Villiger oxidation by the Baeyer-Villiger monooxygenase (BVMO) AacuH then yields monodictyphenone. Monodictyphenone is transformed into compounds with the tetrahydroxanthone skeleton via methylesterification by the methyltransferase AacuQ, followed by the action of the flavin-dependent monooxygenase AacuC, the isomerase AacuP, and the short chain dehydrogenase/reductase AacuF or AacuD. AacuF and AacuD should accept the same compound as a substrate but perform the ketoreduction with a different stereoselectivity, thus yielding blennolides B and A, respectively. In the final step of the biosynthesis, the cytochrome P450 monooxygenase AacuE accepts blennolide B and/or blennolide A to conduct the dimerization reaction to furnish the tetrahydroxanthone dimers, secalonic acids D, B, and F. In Aspergillus aculeatus (strain ATCC 16872 / CBS 172.66 / WB 5094), this protein is Baeyer-Villiger monooxygenase AacuH.